The primary structure comprises 280 residues: Pyridoxal 5'-phosphate synthase subunit PdxS (280 aa).

A D-ribose 5-phosphate-binding site is contributed by Asp-12. The active-site Schiff-base intermediate with D-ribose 5-phosphate is the Lys-69. Gly-141 is a binding site for D-ribose 5-phosphate. Residue Arg-153 participates in D-glyceraldehyde 3-phosphate binding. Residues Gly-202 and Gly-223 to Ser-224 contribute to the D-ribose 5-phosphate site.

Belongs to the PdxS/SNZ family. As to quaternary structure, in the presence of PdxT, forms a dodecamer of heterodimers.

It carries out the reaction aldehydo-D-ribose 5-phosphate + D-glyceraldehyde 3-phosphate + L-glutamine = pyridoxal 5'-phosphate + L-glutamate + phosphate + 3 H2O + H(+). It functions in the pathway cofactor biosynthesis; pyridoxal 5'-phosphate biosynthesis. Its function is as follows. Catalyzes the formation of pyridoxal 5'-phosphate from ribose 5-phosphate (RBP), glyceraldehyde 3-phosphate (G3P) and ammonia. The ammonia is provided by the PdxT subunit. Can also use ribulose 5-phosphate and dihydroxyacetone phosphate as substrates, resulting from enzyme-catalyzed isomerization of RBP and G3P, respectively. In Fusobacterium nucleatum subsp. nucleatum (strain ATCC 25586 / DSM 15643 / BCRC 10681 / CIP 101130 / JCM 8532 / KCTC 2640 / LMG 13131 / VPI 4355), this protein is Pyridoxal 5'-phosphate synthase subunit PdxS.